Consider the following 265-residue polypeptide: Phosphatidylglycerol--prolipoprotein diacylglyceryl transferase (265 aa).

Transmembrane regions (helical) follow at residues 11 to 31 (AVSI…FGFI), 56 to 76 (MVTW…ILFY), 91 to 111 (IWHG…AVWL), 120 to 140 (FLSV…FGRI), 173 to 193 (QLYE…WFSG), 198 to 218 (VGAV…AVEF), and 233 to 253 (WLTM…WLLL). Residue Arg-139 participates in a 1,2-diacyl-sn-glycero-3-phospho-(1'-sn-glycerol) binding.

This sequence belongs to the Lgt family.

It localises to the cell inner membrane. It carries out the reaction L-cysteinyl-[prolipoprotein] + a 1,2-diacyl-sn-glycero-3-phospho-(1'-sn-glycerol) = an S-1,2-diacyl-sn-glyceryl-L-cysteinyl-[prolipoprotein] + sn-glycerol 1-phosphate + H(+). The protein operates within protein modification; lipoprotein biosynthesis (diacylglyceryl transfer). Its function is as follows. Catalyzes the transfer of the diacylglyceryl group from phosphatidylglycerol to the sulfhydryl group of the N-terminal cysteine of a prolipoprotein, the first step in the formation of mature lipoproteins. This is Phosphatidylglycerol--prolipoprotein diacylglyceryl transferase from Nitratidesulfovibrio vulgaris (strain DSM 19637 / Miyazaki F) (Desulfovibrio vulgaris).